A 154-amino-acid chain; its full sequence is Nuclear cap-binding protein subunit 2 (154 aa).

Positions 1–23 are disordered; the sequence is MSTSVDLSSYRDQHFKGSRSEQE. Positions 9-23 are enriched in basic and acidic residues; the sequence is SYRDQHFKGSRSEQE. Residues Tyr-10, Tyr-33, 102–106, 113–117, and 123–124 each bind mRNA; these read RVDWD, RQYGR, and QV. An RRM domain is found at 30 to 108; that stretch reads TTLYVGNLSF…RLIRVDWDAG (79 aa).

It belongs to the RRM NCBP2 family. As to quaternary structure, component of the nuclear cap-binding complex (CBC), a heterodimer composed of Cbp80 and Cbp20 that interacts with m7GpppG-capped RNA. Interacts with Ars2.

It is found in the nucleus. Component of the cap-binding complex (CBC), which binds co-transcriptionally to the 5' cap of pre-mRNAs and is involved in various processes such as pre-mRNA splicing and RNA-mediated gene silencing (RNAi). The CBC complex is involved in miRNA-mediated RNA interference via its interaction with Ars2 and is required for primary microRNAs (miRNAs) processing. Also involved in innate immunity via the short interfering RNAs (siRNAs) processing machinery by restricting the viral RNA production. In the CBC complex, Cbp20 recognizes and binds capped RNAs (m7GpppG-capped RNA) but requires Cbp80 to stabilize the movement of its N-terminal loop and lock the CBC into a high affinity cap-binding state with the cap structure. The protein is Nuclear cap-binding protein subunit 2 (Cbp20) of Drosophila ananassae (Fruit fly).